The primary structure comprises 485 residues: Cobyric acid synthase (485 aa).

Residues 248–435 (VLKVVVPVLP…LHGLFESPDA (188 aa)) form the GATase cobBQ-type domain. Cys-329 serves as the catalytic Nucleophile. His-427 is an active-site residue.

The protein belongs to the CobB/CobQ family. CobQ subfamily.

The protein operates within cofactor biosynthesis; adenosylcobalamin biosynthesis. In terms of biological role, catalyzes amidations at positions B, D, E, and G on adenosylcobyrinic A,C-diamide. NH(2) groups are provided by glutamine, and one molecule of ATP is hydrogenolyzed for each amidation. This Stutzerimonas stutzeri (strain A1501) (Pseudomonas stutzeri) protein is Cobyric acid synthase.